Consider the following 347-residue polypeptide: Chaperone protein DnaJ 1 (347 aa).

One can recognise a J domain in the interval 5 to 75 (DPHSLLGLSP…PAAAPHDAQA (71 aa)). A compositionally biased stretch (low complexity) spans 68-77 (AAPHDAQAAD). Positions 68-91 (AAPHDAQAADARPEPPPEAPPRGA) are disordered. The segment at 107–181 (GGEKAFTIAD…CHGSGQARAA (75 aa)) adopts a CR-type zinc-finger fold. Zn(2+) contacts are provided by Cys120, Cys123, Cys137, Cys140, Cys155, Cys158, Cys169, and Cys172. 4 CXXCXGXG motif repeats span residues 120–127 (CGACGGSG), 137–144 (CATCHGSG), 155–162 (CADCAGRG), and 169–176 (CGACHGSG).

The protein belongs to the DnaJ family. Homodimer. The cofactor is Zn(2+).

It localises to the cytoplasm. In terms of biological role, participates actively in the response to hyperosmotic and heat shock by preventing the aggregation of stress-denatured proteins and by disaggregating proteins, also in an autonomous, DnaK-independent fashion. Unfolded proteins bind initially to DnaJ; upon interaction with the DnaJ-bound protein, DnaK hydrolyzes its bound ATP, resulting in the formation of a stable complex. GrpE releases ADP from DnaK; ATP binding to DnaK triggers the release of the substrate protein, thus completing the reaction cycle. Several rounds of ATP-dependent interactions between DnaJ, DnaK and GrpE are required for fully efficient folding. Also involved, together with DnaK and GrpE, in the DNA replication of plasmids through activation of initiation proteins. The polypeptide is Chaperone protein DnaJ 1 (Aromatoleum aromaticum (strain DSM 19018 / LMG 30748 / EbN1) (Azoarcus sp. (strain EbN1))).